The chain runs to 424 residues: MSAEHSSDIAETIRRIGQQARAAGRALARSGTGARNDALAAIAARIEAGSEAIAAANAADLEAAREAGLDPALIDRMELTPGRIQAMADGLREIAALPDPVGAVRELASRPSGIQVGRMRMPIGVIGIIYESRPNVTADAAGLCIKSGNATILRGGSEAIRSNRAIAEQIRAGLEDAGLPGDGVQVVGTTDRDAVGALIQMPESVDVIVPRGGKGLVERIAREARVPVIKHLDGVCHVYIDEAADTEKAVAIAVNAKTQRLGTCNTMETLLVAEAAAERVLPEVGRQLRDAGIEVRGCERTRALIDEAVPATEEDWTTEYLGPTLAVRVVAGFDDAVAHIERYSSGHTEAIVTESYPLAQRFLREVDSSSVMVNASTRFADGQEYGLGAEIGISTDKLHARGPVGLEGLTTEKWIVLGDGHVRS.

Belongs to the gamma-glutamyl phosphate reductase family.

Its subcellular location is the cytoplasm. It catalyses the reaction L-glutamate 5-semialdehyde + phosphate + NADP(+) = L-glutamyl 5-phosphate + NADPH + H(+). Its pathway is amino-acid biosynthesis; L-proline biosynthesis; L-glutamate 5-semialdehyde from L-glutamate: step 2/2. Functionally, catalyzes the NADPH-dependent reduction of L-glutamate 5-phosphate into L-glutamate 5-semialdehyde and phosphate. The product spontaneously undergoes cyclization to form 1-pyrroline-5-carboxylate. The sequence is that of Gamma-glutamyl phosphate reductase from Halorhodospira halophila (strain DSM 244 / SL1) (Ectothiorhodospira halophila (strain DSM 244 / SL1)).